The sequence spans 49 residues: Large ribosomal subunit protein eL40 (49 aa).

It belongs to the eukaryotic ribosomal protein eL40 family.

In Methanopyrus kandleri (strain AV19 / DSM 6324 / JCM 9639 / NBRC 100938), this protein is Large ribosomal subunit protein eL40.